The sequence spans 453 residues: Gastrin/cholecystokinin type B receptor (453 aa).

At 1–57 (MELLKLNRSAQGSGAGPGASLCRAGGALLNSSGAGNLSCEPPRLRGAGTRELELAIR) the chain is on the extracellular side. 3 N-linked (GlcNAc...) asparagine glycosylation sites follow: asparagine 7, asparagine 30, and asparagine 36. The helical transmembrane segment at 58-79 (VTLYAVIFLMSVGGNVLIIVVL) threads the bilayer. The Cytoplasmic segment spans residues 80-87 (GLSRRLRT). The chain crosses the membrane as a helical span at residues 88–109 (VTNAFLLSLAVSDLLLAVACMP). Residues 110–131 (FTLLPNLMGTFIFGTVVCKAVS) are Extracellular-facing. A disulfide bridge connects residues cysteine 127 and cysteine 206. The helical transmembrane segment at 132–150 (YLMGVSVSVSTLSLVAIAL) threads the bilayer. Over 151–170 (ERYSAICRPLQARVWQTRSH) the chain is Cytoplasmic. Residues 171-189 (AARVIIATWMLSGLLMVPY) form a helical membrane-spanning segment. Residues 190–220 (PVYTAVQPAGGARALQCVHRWPSARVRQTWS) are Extracellular-facing. The chain crosses the membrane as a helical span at residues 221 to 243 (VLLLLLLFFVPGVVMAVAYGLIS). At 244–339 (RELYLGLRFD…KLLAKKRVVR (96 aa)) the chain is on the cytoplasmic side. The disordered stretch occupies residues 258–286 (SESRVRSQGGLRGGAGPGPAPPNGSCRPE). The helical transmembrane segment at 340–361 (MLLVIVVLFFLCWLPLYSANTW) threads the bilayer. Residues 362–379 (RAFDSSGAHRALSGAPIS) lie on the Extracellular side of the membrane. A helical membrane pass occupies residues 380-400 (FIHLLSYASACVNPLVYCFMH). Residues 401 to 453 (RRFRQACLETCARCCPRPPRARPRPLPDEDPPTPSIASLSRLSYTTISTLGPG) are Cytoplasmic-facing. A lipid anchor (S-palmitoyl cysteine) is attached at cysteine 414. A disordered region spans residues 422–453 (RPRPLPDEDPPTPSIASLSRLSYTTISTLGPG). Residues 435–453 (SIASLSRLSYTTISTLGPG) show a composition bias toward polar residues.

This sequence belongs to the G-protein coupled receptor 1 family. In terms of tissue distribution, parietal cells, pancreas, brain and various neoplastic tissues.

Its subcellular location is the cell membrane. Its function is as follows. Receptor for gastrin and cholecystokinin. The CCK-B receptors occur throughout the central nervous system where they modulate anxiety, analgesia, arousal, and neuroleptic activity. This receptor mediates its action by association with G proteins that activate a phosphatidylinositol-calcium second messenger system. The polypeptide is Gastrin/cholecystokinin type B receptor (CCKBR) (Canis lupus familiaris (Dog)).